Here is a 1186-residue protein sequence, read N- to C-terminus: DNA excision repair protein ERCC-5 (1186 aa).

The N-domain stretch occupies residues 1-78 (MGVQGLWKLL…RIRPIFVFDG (78 aa)). Lysine 8 bears the N6-acetyllysine mark. Aspartate 30 contacts Mg(2+). The DNA-binding; may bind to the undamaged single-strand DNA of the DNA repair bubble stretch occupies residues 31–67 (ISIWLNQALKGVRDRHGNSIENPHLLTLFHRLCKLLF). Aspartate 77 is a binding site for Mg(2+). Residues 79-785 (DAPLLKKQTL…LRLFGIPYIQ (707 aa)) form a spacer region region. Disordered stretches follow at residues 306 to 342 (ESLP…PPSP), 354 to 385 (GSSS…SISP), 404 to 473 (CAGD…SVPK), 510 to 533 (HSDA…TNSV), and 667 to 724 (QAEF…AEDS). The span at 325 to 336 (PCEKLKTEKEPD) shows a compositional bias: basic and acidic residues. Phosphoserine is present on serine 384. The segment covering 454–472 (AEEHVASTNEGREPTDSVP) has biased composition (basic and acidic residues). Serine 705 carries the post-translational modification Phosphoserine. The I-domain stretch occupies residues 786–881 (APMEAEAQCA…VTAMEILNEF (96 aa)). 4 residues coordinate Mg(2+): glutamate 789, glutamate 791, aspartate 810, and aspartate 812. The segment at 820–836 (HVYRNFFNKNKFVEYYQ) is DNA-binding; may bind to the undamaged single-strand DNA of the DNA repair bubble. A DNA-binding; H2TH (helix-2turn-helix) motif which binds double-stranded DNA region spans residues 848-880 (RNKLINLAYLLGSDYTEGIPTVGCVTAMEILNE). Aspartate 861 contributes to the Mg(2+) binding site. Positions 912–918 (TKVKKKL) are DNA-binding; may bind double-stranded DNA. Residues 981-1009 (LKQLDAQQTQLRIDSFFRLAQQEKEDAKR) form an interaction with PCNA region. The tract at residues 1011 to 1186 (KSQRLNRAVT…RRARGRKRKT (176 aa)) is interaction with ERCC6/CSB. Disordered regions lie at residues 1056–1081 (QKRG…SKGK) and 1095–1186 (ESSD…KRKT). Positions 1057–1074 (KRGITNTLEESSSLKRKR) match the Nuclear localization signal 1 motif. A compositionally biased stretch (polar residues) spans 1124 to 1133 (TSASDSQNSV). Residues 1169–1186 (FGKKRRKLRRARGRKRKT) carry the Nuclear localization signal 2 motif. Residues 1169–1186 (FGKKRRKLRRARGRKRKT) show a composition bias toward basic residues.

This sequence belongs to the XPG/RAD2 endonuclease family. XPG subfamily. In terms of assembly, monomer. Homodimer. Component of the homologous recombination repair (HR) complex composed of ERCC5/XPG, BRCA2, PALB2, DSS1 and RAD51. Within the complex, interacts with BRCA2 and PALB2. Interacts with RNA polymerase II. Interacts (via C-terminus) with ERCC6/CSB; the interaction stimulates ERCC6/CSB binding to the DNA repair bubble and ERCC6/CSB ATPase activity. May form a complex composed of RNA polymerase II, ERCC6/CSB and ERCC5/XPG which associates with the DNA repair bubble during transcription-coupled nucleotide excision repair. Interacts with BRCA1; the interaction promotes the release of BRCA1 from DNA. Interacts with PCNA. Interacts with NTHL1; the interaction stimulates NTHL1 activity and NTHL1 binding to its DNA substrate. Mg(2+) is required as a cofactor.

It is found in the nucleus. It localises to the chromosome. Functionally, single-stranded structure-specific DNA endonuclease involved in DNA excision repair. Makes the 3'incision in DNA nucleotide excision repair (NER). Binds and bends DNA repair bubble substrate and breaks base stacking at the single-strand/double-strand DNA junction of the DNA bubble. Plays a role in base excision repair (BER) by promoting the binding of DNA glycosylase NTHL1 to its substrate and increasing NTHL1 catalytic activity that removes oxidized pyrimidines from DNA. Involved in transcription-coupled nucleotide excision repair (TCR) which allows RNA polymerase II-blocking lesions to be rapidly removed from the transcribed strand of active genes. Functions during the initial step of TCR in cooperation with ERCC6/CSB to recognized stalled RNA polymerase II. Also, stimulates ERCC6/CSB binding to the DNA repair bubble and ERCC6/CSB ATPase activity. Required for DNA replication fork maintenance and preservation of genomic stability. Involved in homologous recombination repair (HRR) induced by DNA replication stress by recruiting RAD51, BRCA2, and PALB2 to the damaged DNA site. In TFIIH stimulates the 5'-3' helicase activity of XPD/ERCC2 and the DNA translocase activity of XPB/ERCC3. During HRR, binds to the replication fork with high specificity and stabilizes it. Also, acts upstream of HRR, to promote the release of BRCA1 from DNA. In Homo sapiens (Human), this protein is DNA excision repair protein ERCC-5 (ERCC5).